Reading from the N-terminus, the 295-residue chain is 33 kDa chaperonin (295 aa).

2 disulfides stabilise this stretch: Cys-238–Cys-240 and Cys-271–Cys-274.

It belongs to the HSP33 family. Under oxidizing conditions two disulfide bonds are formed involving the reactive cysteines. Under reducing conditions zinc is bound to the reactive cysteines and the protein is inactive.

The protein localises to the cytoplasm. Functionally, redox regulated molecular chaperone. Protects both thermally unfolding and oxidatively damaged proteins from irreversible aggregation. Plays an important role in the bacterial defense system toward oxidative stress. This Clostridium botulinum (strain Eklund 17B / Type B) protein is 33 kDa chaperonin.